The chain runs to 109 residues: Small serum protein 2 (109 aa).

Residues 1 to 19 form the signal peptide; sequence MRVFFSLIIFSFMLATCQG. Cystine bridges form between cysteine 21–cysteine 72, cysteine 39–cysteine 64, cysteine 59–cysteine 93, cysteine 62–cysteine 71, and cysteine 84–cysteine 107.

As to quaternary structure, forms a stable, non-covalent complex with serotriflin.

The protein resides in the secreted. Functionally, may serve as a self-defense protein against the toxic effects of the snake venom during accidental envenomation. Does not show inhibitory activity towards brevilysin H6. The protein is Small serum protein 2 of Protobothrops flavoviridis (Habu).